The chain runs to 169 residues: Photosystem I assembly protein Ycf3 (169 aa).

TPR repeat units lie at residues 36–69 (AFTY…EIDP), 73–106 (SYIL…NPFL), and 121–154 (GEQA…TPGN).

Belongs to the Ycf3 family.

It is found in the plastid. The protein resides in the chloroplast thylakoid membrane. Its function is as follows. Essential for the assembly of the photosystem I (PSI) complex. May act as a chaperone-like factor to guide the assembly of the PSI subunits. This is Photosystem I assembly protein Ycf3 from Cucumis sativus (Cucumber).